The following is a 222-amino-acid chain: Beta-casein (222 aa).

Residues 1-15 form the signal peptide; the sequence is MKVLILACLVALAIA. The residue at position 27 (threonine 27) is a Phosphothreonine. Serine 30, serine 32, serine 33, and serine 34 each carry phosphoserine.

Belongs to the beta-casein family. Mammary gland specific. Secreted in milk.

The protein localises to the secreted. In terms of biological role, important role in determination of the surface properties of the casein micelles. This chain is Beta-casein (CSN2), found in Capra hircus (Goat).